The sequence spans 404 residues: MTYKIMAINAGSSSLKFQLLNMPQGALLCQGLIERIGLPEARFMLKTSAQKWQETLPIADHHEAVTLLLEALTGRGILSSLQEIDGVGHRVAHGGERFKDAALVCDDTLREIERLAELAPLHNPVNALGIRLFRQRLPAVPAVAVFDTAFHQTLAPEAWLYPLPWRYYAELGIRRYGFHGTSHHYVSSALAEKLGVPLSALRVVSCHLGNGCSVCAIKGGQSVNTSMGFTPQSGVMMGTRSGDIDPSILPWLVEKEGKSALQLSQLLNNESGLLGVSGVSSDYRDVEQAADAGNERAALALSLFAERIRATIGSYIMQMGGLDALIFTGGIGEHSARARATICRNLHFLGLALDDEKNQRSATFIQADNALVKVAVINTNEELMIARDVMRLALPQARELTVSA.

It belongs to the acetokinase family. PduW subfamily.

Its subcellular location is the cytoplasm. The enzyme catalyses propanoate + ATP = propanoyl phosphate + ADP. The protein operates within polyol metabolism; 1,2-propanediol degradation. Functionally, works with phosphate acetyltransferase (pta) to capture exogenous propionate and regenerate propionyl-CoA during degradation of 1,2-propanediol (1,2-PD). The chain is Propionate kinase from Klebsiella pneumoniae (strain 342).